The primary structure comprises 121 residues: MNHAPHLYFAWQQLVEKSQLMLRLATEEQWDELIASEMAYVNAVQEIAHLTEEVAPSTTMQEQLRPMLRLILDNESKVKQLLQIRMDELAKLVGQSSVQKSVLSAYGDQGGFVLAPQDNFS.

Positions 1-50 (MNHAPHLYFAWQQLVEKSQLMLRLATEEQWDELIASEMAYVNAVQEIAHL) are required for homodimerization. Residues 60 to 98 (MQEQLRPMLRLILDNESKVKQLLQIRMDELAKLVGQSSV) are fliD binding.

This sequence belongs to the FliT family. As to quaternary structure, homodimer. Interacts with FliD and FlhC.

The protein localises to the cytoplasm. Its subcellular location is the cytosol. Functionally, dual-function protein that regulates the transcription of class 2 flagellar operons and that also acts as an export chaperone for the filament-capping protein FliD. As a transcriptional regulator, acts as an anti-FlhDC factor; it directly binds FlhC, thus inhibiting the binding of the FlhC/FlhD complex to class 2 promoters, resulting in decreased expression of class 2 flagellar operons. As a chaperone, effects FliD transition to the membrane by preventing its premature polymerization, and by directing it to the export apparatus. The chain is Flagellar protein FliT from Escherichia coli O8 (strain IAI1).